The chain runs to 484 residues: Iroquois-class homeodomain protein IRX-5 (484 aa).

Positions 112–174 (DPAYRKNATR…NARRRLKKEN (63 aa)) form a DNA-binding region, homeobox; TALE-type. Disordered stretches follow at residues 176–393 (MTWT…QCPF) and 424–443 (GHPG…FNGL). Residues 185-202 (EDEEEEENIDLEKNDEDE) are compositionally biased toward acidic residues. Composition is skewed to basic and acidic residues over residues 203–212 (PQKPEDKGDL) and 249–265 (SDFK…ELPR). The residue at position 273 (Ser273) is a Phosphoserine. The segment covering 318–328 (SPPPPPPPPPA) has biased composition (pro residues). Over residues 375-389 (SRASPAPAPARSPSA) the composition is skewed to low complexity. Position 465 is a phosphoserine (Ser465).

Belongs to the TALE/IRO homeobox family. In terms of tissue distribution, not expressed in the developing metanephric kidney or adult kidney.

The protein resides in the nucleus. Establishes the cardiac repolarization gradient by its repressive actions on the KCND2 potassium-channel gene. Required for retinal cone bipolar cell differentiation. May regulate contrast adaptation in the retina and control specific aspects of visual function in circuits of the mammalian retina. Involved in craniofacial and gonadal development. Modulates the migration of progenitor cell populations in branchial arches and gonads by repressing CXCL12. This chain is Iroquois-class homeodomain protein IRX-5 (Irx5), found in Mus musculus (Mouse).